The sequence spans 524 residues: RNA-splicing ligase RtcB homolog 2 (524 aa).

Residues D141, C144, H249, H281, and H372 each coordinate Mn(2+). Position 248–252 (248–252 (NHYLE)) interacts with GMP. GMP is bound by residues 372-373 (HN), 421-424 (GGSM), S428, 447-450 (HGAG), and K523. H447 functions as the GMP-histidine intermediate in the catalytic mechanism.

Belongs to the RtcB family. Catalytic component of the tRNA-splicing ligase complex. The cofactor is Mn(2+).

The catalysed reaction is a 3'-end 3'-phospho-ribonucleotide-RNA + a 5'-end dephospho-ribonucleoside-RNA + GTP = a ribonucleotidyl-ribonucleotide-RNA + GMP + diphosphate. It carries out the reaction a 3'-end 2',3'-cyclophospho-ribonucleotide-RNA + a 5'-end dephospho-ribonucleoside-RNA + GTP + H2O = a ribonucleotidyl-ribonucleotide-RNA + GMP + diphosphate + H(+). In terms of biological role, catalytic subunit of the tRNA-splicing ligase complex that acts by directly joining spliced tRNA halves to mature-sized tRNAs by incorporating the precursor-derived splice junction phosphate into the mature tRNA as a canonical 3',5'-phosphodiester. May act as an RNA ligase with broad substrate specificity, and may function toward other RNAs. This chain is RNA-splicing ligase RtcB homolog 2, found in Entamoeba dispar (strain ATCC PRA-260 / SAW760).